The following is a 498-amino-acid chain: MHTHNNFKTPSDEDELDDLDEDMVVGVIAEIEQEVLNESDSDNDEYDLVEMGAPVPDNDGDSSYDGNESISSDDSFDPNAADSDSDDSMLDDAGDDASAGGATSSKRRKDDDNPSGSNRQSEATFDLDEDDETDETVRAMIAAIKKPRSAPPEIKLEDFITDICFHPDRDIIALATIIGDVHLYEYDNEANKLLRTIEVHSKACRDVEFTEDGRFLLTCSKDKCVMVTDMETEKLKKLYETAHDDAINTLHVLNENLFATGDDAGTVKLWDLRTKNAIFELKELEDQITQLTTNDQSKLLLATSADGYLTTFNIAARKMYVQSEPYEEELSCMGIYRGDSKLVVGTSKGRLYTYNWGQFGYHCDMYPGIKSPISLMIPITDRIACVAGEDGNIRACHIAPYRNLGVVGQHNMPIESLDVNSNGELIASSSHNNDVRFWNVKYFEDFGDIKYNEKHNAYKEQRHNLPSSKCSNASDFFADLTKEDADDDDAGAGPSNMA.

Positions 1-133 (MHTHNNFKTP…TFDLDEDDET (133 aa)) are disordered. Acidic residues-rich tracts occupy residues 12–23 (DEDELDDLDEDM), 31–48 (IEQE…EYDL), and 83–95 (SDSD…DAGD). Residues 114-123 (PSGSNRQSEA) are compositionally biased toward polar residues. WD repeat units lie at residues 155–194 (KLED…NKLL), 199–238 (VHSK…LKKL), 242–280 (AHDD…AIFE), 283–322 (ELED…MYVQ), 325–364 (PYEE…YHCD), and 409–448 (QHNM…DFGD).

The protein belongs to the WD repeat WDR55 family.

The polypeptide is WD repeat-containing protein 55 homolog (Drosophila erecta (Fruit fly)).